We begin with the raw amino-acid sequence, 421 residues long: Gamma-glutamyl phosphate reductase (421 aa).

Belongs to the gamma-glutamyl phosphate reductase family.

The protein resides in the cytoplasm. The enzyme catalyses L-glutamate 5-semialdehyde + phosphate + NADP(+) = L-glutamyl 5-phosphate + NADPH + H(+). The protein operates within amino-acid biosynthesis; L-proline biosynthesis; L-glutamate 5-semialdehyde from L-glutamate: step 2/2. In terms of biological role, catalyzes the NADPH-dependent reduction of L-glutamate 5-phosphate into L-glutamate 5-semialdehyde and phosphate. The product spontaneously undergoes cyclization to form 1-pyrroline-5-carboxylate. In Pseudomonas savastanoi pv. phaseolicola (strain 1448A / Race 6) (Pseudomonas syringae pv. phaseolicola (strain 1448A / Race 6)), this protein is Gamma-glutamyl phosphate reductase.